The following is a 217-amino-acid chain: Adapter protein MecA (217 aa).

Belongs to the MecA family. As to quaternary structure, homodimer.

In terms of biological role, enables the recognition and targeting of unfolded and aggregated proteins to the ClpC protease or to other proteins involved in proteolysis. The chain is Adapter protein MecA from Listeria monocytogenes serovar 1/2a (strain ATCC BAA-679 / EGD-e).